The chain runs to 426 residues: Enolase 1 (426 aa).

Q162 is a binding site for (2R)-2-phosphoglycerate. Catalysis depends on E204, which acts as the Proton donor. D241, E284, and D311 together coordinate Mg(2+). 4 residues coordinate (2R)-2-phosphoglycerate: K336, R365, S366, and K387. The active-site Proton acceptor is K336.

The protein belongs to the enolase family. The cofactor is Mg(2+).

It localises to the cytoplasm. Its subcellular location is the secreted. The protein resides in the cell surface. It catalyses the reaction (2R)-2-phosphoglycerate = phosphoenolpyruvate + H2O. The protein operates within carbohydrate degradation; glycolysis; pyruvate from D-glyceraldehyde 3-phosphate: step 4/5. Catalyzes the reversible conversion of 2-phosphoglycerate (2-PG) into phosphoenolpyruvate (PEP). It is essential for the degradation of carbohydrates via glycolysis. The sequence is that of Enolase 1 from Methanospirillum hungatei JF-1 (strain ATCC 27890 / DSM 864 / NBRC 100397 / JF-1).